Reading from the N-terminus, the 261-residue chain is uncharacterized protein (261 aa).

Residues Ile33, Asp78, and Asn105 each coordinate NADP(+). Ser157 acts as the Proton donor in catalysis. Residues Tyr172, Lys176, and Ser206 each coordinate NADP(+). The active-site Proton acceptor is the Tyr172. Lys176 serves as the catalytic Lowers pKa of active site Tyr.

It belongs to the short-chain dehydrogenases/reductases (SDR) family.

The protein resides in the cytoplasm. Its subcellular location is the nucleus. This is an uncharacterized protein from Schizosaccharomyces pombe (strain 972 / ATCC 24843) (Fission yeast).